The sequence spans 644 residues: uncharacterized protein (644 aa).

Gly254 to Ser261 serves as a coordination point for ATP.

This is an uncharacterized protein from Bacillus anthracis.